A 434-amino-acid chain; its full sequence is MTVRRALALAALALAVSPALAAQERPTIVVGSPDFRPLPIAVAAFQGEGDAGAAATQTAEVVRADLVLSGLFDVLDPRGFLADPSEGFAAPSIRFARWADVGADGLAKARVRRGPAGLEGELHLYEVRAGREVLVKLLRVDGADARSLAHRMADEIVRYYTREPGIFATRIAAIRRGRGTWELVTQDMDGGNQQVLLSERSILMSPAWRPDGREILVTSYRSGRPELWAYRFSDRAFRPLGRHRNAFGGVYSPDGSRIAFTVSEGNVTDLWVMSADGAGARKLTSDPAIDVSPTWSPDGRRIAFVSDRSGTPQIYVMGADGSGARRLTFQGNYNQTPQWSPRGDLIAFTARDERKVFDVFVVSPDSGAINRITQDQGRTNEEPSWAPNGRLMIFRTDRNGGIQLVVSDARGDRQTPVTSGKTDLAAPAWGPLAP.

The first 21 residues, 1 to 21, serve as a signal peptide directing secretion; it reads MTVRRALALAALALAVSPALA. A disordered region spans residues 411-434; the sequence is GDRQTPVTSGKTDLAAPAWGPLAP.

Belongs to the TolB family. The Tol-Pal system is composed of five core proteins: the inner membrane proteins TolA, TolQ and TolR, the periplasmic protein TolB and the outer membrane protein Pal. They form a network linking the inner and outer membranes and the peptidoglycan layer.

It is found in the periplasm. Functionally, part of the Tol-Pal system, which plays a role in outer membrane invagination during cell division and is important for maintaining outer membrane integrity. The protein is Tol-Pal system protein TolB of Anaeromyxobacter dehalogenans (strain 2CP-1 / ATCC BAA-258).